A 273-amino-acid chain; its full sequence is Chondrolectin (273 aa).

Residues 1–21 (MSRVVSLLLGAALLCGHGAFC) form the signal peptide. At 22–216 (RRVVSGQKVC…VVTEAGIIPN (195 aa)) the chain is on the extracellular side. Residues 35-179 (FKHPCYKMAY…CNMKHNYICK (145 aa)) enclose the C-type lectin domain. 2 disulfides stabilise this stretch: Cys61–Cys178 and Cys144–Cys170. N-linked (GlcNAc...) asparagine glycosylation occurs at Asn86. The helical transmembrane segment at 217–237 (LIYVVIPTIPLLLLILVAFGT) threads the bilayer. The Cytoplasmic portion of the chain corresponds to 238–273 (CCFQMLHKSKGRTKTSPNQSTLWISKSTRKESGMEV). The interval 248–273 (GRTKTSPNQSTLWISKSTRKESGMEV) is disordered. Polar residues predominate over residues 251–263 (KTSPNQSTLWISK).

Interacts with RABGGTB. Post-translationally, N-glycosylated. In terms of tissue distribution, found in spleen, testis, prostate and fetal liver. Expression limited to vascular muscle of testis, smooth muscle of prostate stroma, heart muscle, skeletal muscle, crypts of small intestine, and red pulp of spleen. B lymphocytes express isoform 2 only; peripheral blood T lymphocytes express isoform 3 only; granulocytes and monocytes express neither isoform 2 nor isoform 3. During development of T lymphocytes, bone marrow progenitor cells express isoform 2 only; thymocytes at different stages of maturation express predominantly isoform 2 and weakly isoform 3, and mature thymocytes express only isoform 2.

The protein localises to the cytoplasm. It is found in the membrane. It localises to the endoplasmic reticulum. Its subcellular location is the endoplasmic reticulum membrane. In terms of biological role, may play a role in the development of the nervous system such as in neurite outgrowth and elongation. May be involved in motor axon growth and guidance. The chain is Chondrolectin (CHODL) from Homo sapiens (Human).